The following is a 77-amino-acid chain: Putative antitoxin MazE7 (77 aa).

The disordered stretch occupies residues 49 to 77 (REASHAETTTQAVRDEDREWEGTVGDGLG).

In terms of assembly, forms a complex with cognate toxin MazF7.

Its function is as follows. Antitoxin component of a type II toxin-antitoxin (TA) system. This Mycobacterium tuberculosis (strain CDC 1551 / Oshkosh) protein is Putative antitoxin MazE7 (mazE7).